We begin with the raw amino-acid sequence, 1693 residues long: 1-phosphatidylinositol 4,5-bisphosphate phosphodiesterase eta-1 (1693 aa).

The region spanning 20–128 (SVMQSGTQMI…WITGLKYLMA (109 aa)) is the PH domain. EF-hand domains lie at 142–177 (THDQWVKQTFEEADKNGDGLLNIEEIHQLMHKLNVN), 178–214 (LPRRKVRQMFQEADTDENQGTLTFEEFCVFYKMMSLR), and 226–246 (DKKDHLTVEELAQFLKVEQKM). Ca(2+)-binding residues include D155, N157, D159, and E166. The 146-residue stretch at 299–444 (QDMDQPLCNY…LKGKILVKGK (146 aa)) folds into the PI-PLC X-box domain. H314 is a catalytic residue. Positions 315, 344, and 346 each coordinate Ca(2+). Residue H358 is part of the active site. E393 contributes to the Ca(2+) binding site. Substrate contacts are provided by K442 and K444. The disordered stretch occupies residues 526–585 (LNAHLKQSPDVKESGKKSHGRSLMTNFGKHKKTTKSRSKSYSTDDEEDTQQSTGKEGGQL). Basic and acidic residues predominate over residues 532–541 (QSPDVKESGK). Residues 553 to 563 (GKHKKTTKSRS) are compositionally biased toward basic residues. The region spanning 601 to 714 (LSDLVVYTNS…GYVLKPQQMC (114 aa)) is the PI-PLC Y-box domain. Residues S627 and R654 each coordinate substrate. The C2 domain maps to 715–843 (KGTFNPFSGD…PGYRHVYLEG (129 aa)). Ca(2+) contacts are provided by I758, D760, D784, D813, H814, and D815. Positions 992 to 1005 (IEGKENSLAEDKDG) are enriched in basic and acidic residues. 4 disordered regions span residues 992-1014 (IEGKENSLAEDKDGRRKGKASIK), 1052-1089 (TGEQLGMSSPRGGRTTSNATSNCQENPCPSKSLSPKQH), 1300-1329 (LESNLPGSPNTSRGWLPKSPTKGEDWETLK), and 1578-1613 (LSSRSQSRVRNIASRAKEKQEANKQKVPNPSNGAGV). Positions 1065–1086 (RTTSNATSNCQENPCPSKSLSP) are enriched in polar residues. Positions 1592–1601 (RAKEKQEANK) are enriched in basic and acidic residues.

It depends on Ca(2+) as a cofactor. In terms of tissue distribution, expressed in brain and to a lower extent in lung. In brain, it is found in cerebrum, cerebellum and spinal cord. In embryo expressed in the notochord, developing spinal cord (in a ventral to dorsal gradient), dorsal root ganglia, cerebellum and dermatomyosome.

It is found in the cytoplasm. The protein resides in the membrane. The enzyme catalyses a 1,2-diacyl-sn-glycero-3-phospho-(1D-myo-inositol-4,5-bisphosphate) + H2O = 1D-myo-inositol 1,4,5-trisphosphate + a 1,2-diacyl-sn-glycerol + H(+). In terms of biological role, the production of the second messenger molecules diacylglycerol (DAG) and inositol 1,4,5-trisphosphate (IP3) is mediated by calcium-activated phosphatidylinositol-specific phospholipase C enzymes. This is 1-phosphatidylinositol 4,5-bisphosphate phosphodiesterase eta-1 from Homo sapiens (Human).